The chain runs to 139 residues: Putative nickel-responsive regulator (139 aa).

Ni(2+) is bound by residues His-79, His-90, His-92, and Cys-98.

It belongs to the transcriptional regulatory CopG/NikR family. The cofactor is Ni(2+).

Transcriptional regulator. This is Putative nickel-responsive regulator from Geobacter metallireducens (strain ATCC 53774 / DSM 7210 / GS-15).